A 204-amino-acid polypeptide reads, in one-letter code: MLRIAIAKGRLMDSLINYLDVIEYTTLSETLKNRERQLLLSVDNIECILVKGSDVPIYVEQGMADIGIVGSDILDERQYNVNNLLNMPFGACHFAVAAKPETTNYRKIATSYVHTAETYFKSKGIDVELIKLNGSVELACVVDMVDGIVDIVQTGTTLKANGLVEKQHISDINARLITNKAAYFKKSQLIEQFIRSLEVSIANA.

It belongs to the ATP phosphoribosyltransferase family. Short subfamily. Heteromultimer composed of HisG and HisZ subunits.

It localises to the cytoplasm. It carries out the reaction 1-(5-phospho-beta-D-ribosyl)-ATP + diphosphate = 5-phospho-alpha-D-ribose 1-diphosphate + ATP. It participates in amino-acid biosynthesis; L-histidine biosynthesis; L-histidine from 5-phospho-alpha-D-ribose 1-diphosphate: step 1/9. In terms of biological role, catalyzes the condensation of ATP and 5-phosphoribose 1-diphosphate to form N'-(5'-phosphoribosyl)-ATP (PR-ATP). Has a crucial role in the pathway because the rate of histidine biosynthesis seems to be controlled primarily by regulation of HisG enzymatic activity. The polypeptide is ATP phosphoribosyltransferase (Staphylococcus aureus (strain Mu3 / ATCC 700698)).